We begin with the raw amino-acid sequence, 182 residues long: Large ribosomal subunit protein uL5 (182 aa).

This sequence belongs to the universal ribosomal protein uL5 family. In terms of assembly, part of the 50S ribosomal subunit; part of the 5S rRNA/L5/L18/L25 subcomplex. Contacts the 5S rRNA and the P site tRNA. Forms a bridge to the 30S subunit in the 70S ribosome.

In terms of biological role, this is one of the proteins that bind and probably mediate the attachment of the 5S RNA into the large ribosomal subunit, where it forms part of the central protuberance. In the 70S ribosome it contacts protein S13 of the 30S subunit (bridge B1b), connecting the 2 subunits; this bridge is implicated in subunit movement. Contacts the P site tRNA; the 5S rRNA and some of its associated proteins might help stabilize positioning of ribosome-bound tRNAs. The protein is Large ribosomal subunit protein uL5 of Coxiella burnetii (strain CbuK_Q154) (Coxiella burnetii (strain Q154)).